The chain runs to 392 residues: Outer membrane protein assembly factor BamB (392 aa).

Residues 1-19 (MQLRKLLLPGLLSVTLLSG) form the signal peptide. Residue Cys-20 is the site of N-palmitoyl cysteine attachment. Cys-20 carries S-diacylglycerol cysteine lipidation.

It belongs to the BamB family. In terms of assembly, part of the Bam complex, which is composed of the outer membrane protein BamA, and four lipoproteins BamB, BamC, BamD and BamE.

The protein resides in the cell outer membrane. In terms of biological role, part of the outer membrane protein assembly complex, which is involved in assembly and insertion of beta-barrel proteins into the outer membrane. The polypeptide is Outer membrane protein assembly factor BamB (Shigella dysenteriae serotype 1 (strain Sd197)).